The following is a 375-amino-acid chain: ATAGQVIKCKAAVAWEAGKPLSLEEVEVAPPRAGEVRIKVVATGVCHTDAYTLSGSDPEGAFPVILGHEGAGLVESVGEGVTKFKAGDTVIPLYVPQCGECKFCKNPKTNLCQKIRVTQGRGLMPDNTSRFTCKGKQLFHFMGTSTFSEYTVVADISLANVDPKAPLDKVCLLGCGISTGYGAALNTAKVEPGSTCAVFGLGAVGLAAIMGCKVAGATRIIGVDINPEKFGKAAEFGATECLNPKDHARPVQEVLVEMTDGGVDYSFECIGNVEIMRSALEACHKGWGESVIIGVAGAGQEIATRPFQLVTGRVWKATAFGGWKSVESVPKLVEDYMNKKLKVDEFVTHTLPFDSINEGFDLMHAGKSIRCVLTF.

Ala1 carries the N-acetylalanine modification. Zn(2+) contacts are provided by Cys46, His68, Cys98, Cys101, Cys104, Cys112, and Cys175.

Belongs to the zinc-containing alcohol dehydrogenase family. Class-III subfamily. As to quaternary structure, homodimer or heterodimer with L chain. Requires Zn(2+) as cofactor.

The protein resides in the cytoplasm. The catalysed reaction is a primary alcohol + NAD(+) = an aldehyde + NADH + H(+). The enzyme catalyses a secondary alcohol + NAD(+) = a ketone + NADH + H(+). It carries out the reaction S-(hydroxymethyl)glutathione + NADP(+) = S-formylglutathione + NADPH + H(+). It catalyses the reaction S-(hydroxymethyl)glutathione + NAD(+) = S-formylglutathione + NADH + H(+). Its function is as follows. Class-III ADH is remarkably ineffective in oxidizing ethanol, but it readily catalyzes the oxidation of long-chain primary alcohols and the oxidation of S-(hydroxymethyl) glutathione. The sequence is that of Alcohol dehydrogenase class-3 chain H from Gadus morhua (Atlantic cod).